A 167-amino-acid polypeptide reads, in one-letter code: uncharacterized protein (167 aa).

Positions 1 to 25 are cleaved as a signal peptide; sequence MPFSVTKFSLIFVALLLAEALVAQS.

This is an uncharacterized protein from Caenorhabditis elegans.